The following is a 217-amino-acid chain: Pyridoxine/pyridoxamine 5'-phosphate oxidase (217 aa).

Residues 13–16 (RRDY) and Lys71 contribute to the substrate site. FMN is bound by residues 66–71 (RIVLLK), 81–82 (YT), Lys88, and Gln110. Tyr128, Arg132, and Ser136 together coordinate substrate. FMN contacts are provided by residues 145–146 (QS) and Trp190. Residue 196-198 (RLH) coordinates substrate. Arg200 provides a ligand contact to FMN.

It belongs to the pyridoxamine 5'-phosphate oxidase family. Homodimer. FMN serves as cofactor.

The enzyme catalyses pyridoxamine 5'-phosphate + O2 + H2O = pyridoxal 5'-phosphate + H2O2 + NH4(+). It carries out the reaction pyridoxine 5'-phosphate + O2 = pyridoxal 5'-phosphate + H2O2. The protein operates within cofactor metabolism; pyridoxal 5'-phosphate salvage; pyridoxal 5'-phosphate from pyridoxamine 5'-phosphate: step 1/1. Its pathway is cofactor metabolism; pyridoxal 5'-phosphate salvage; pyridoxal 5'-phosphate from pyridoxine 5'-phosphate: step 1/1. Functionally, catalyzes the oxidation of either pyridoxine 5'-phosphate (PNP) or pyridoxamine 5'-phosphate (PMP) into pyridoxal 5'-phosphate (PLP). This Edwardsiella ictaluri (strain 93-146) protein is Pyridoxine/pyridoxamine 5'-phosphate oxidase.